We begin with the raw amino-acid sequence, 505 residues long: Probable glycine dehydrogenase (decarboxylating) subunit 2 (505 aa).

K274 is subject to N6-(pyridoxal phosphate)lysine.

This sequence belongs to the GcvP family. C-terminal subunit subfamily. In terms of assembly, the glycine cleavage system is composed of four proteins: P, T, L and H. In this organism, the P 'protein' is a heterodimer of two subunits. Pyridoxal 5'-phosphate serves as cofactor.

It carries out the reaction N(6)-[(R)-lipoyl]-L-lysyl-[glycine-cleavage complex H protein] + glycine + H(+) = N(6)-[(R)-S(8)-aminomethyldihydrolipoyl]-L-lysyl-[glycine-cleavage complex H protein] + CO2. In terms of biological role, the glycine cleavage system catalyzes the degradation of glycine. The P protein binds the alpha-amino group of glycine through its pyridoxal phosphate cofactor; CO(2) is released and the remaining methylamine moiety is then transferred to the lipoamide cofactor of the H protein. This Sulfurisphaera tokodaii (strain DSM 16993 / JCM 10545 / NBRC 100140 / 7) (Sulfolobus tokodaii) protein is Probable glycine dehydrogenase (decarboxylating) subunit 2.